An 872-amino-acid polypeptide reads, in one-letter code: DNA mismatch repair protein MutS (872 aa).

622–629 (GPNMAGKS) serves as a coordination point for ATP.

Belongs to the DNA mismatch repair MutS family.

Its function is as follows. This protein is involved in the repair of mismatches in DNA. It is possible that it carries out the mismatch recognition step. This protein has a weak ATPase activity. This is DNA mismatch repair protein MutS from Geobacter metallireducens (strain ATCC 53774 / DSM 7210 / GS-15).